A 719-amino-acid polypeptide reads, in one-letter code: Polyribonucleotide nucleotidyltransferase (719 aa).

Mg(2+)-binding residues include Asp-487 and Asp-493. The 60-residue stretch at 554 to 613 (PRIETFKIATDKIREVIGTGGKVIREIVEKTGAKVNIEDDGTVKVASSDGEAMKAAIKWI) folds into the KH domain. An S1 motif domain is found at 623–691 (GQIYDGTVVK…DRGKTRLSMK (69 aa)). Residues 691–719 (KVVDQTTGEDLEAKQKDAPAEAPREAAGE) form a disordered region. Basic and acidic residues predominate over residues 701–719 (LEAKQKDAPAEAPREAAGE).

It belongs to the polyribonucleotide nucleotidyltransferase family. It depends on Mg(2+) as a cofactor.

It localises to the cytoplasm. It carries out the reaction RNA(n+1) + phosphate = RNA(n) + a ribonucleoside 5'-diphosphate. Its function is as follows. Involved in mRNA degradation. Catalyzes the phosphorolysis of single-stranded polyribonucleotides processively in the 3'- to 5'-direction. This Bradyrhizobium sp. (strain ORS 278) protein is Polyribonucleotide nucleotidyltransferase.